The following is a 350-amino-acid chain: Anthranilate phosphoribosyltransferase (350 aa).

5-phospho-alpha-D-ribose 1-diphosphate contacts are provided by residues glycine 93, 96–97 (GD), threonine 101, 103–106 (NIST), 121–129 (KHGNRSASG), and serine 133. Glycine 93 provides a ligand contact to anthranilate. Serine 105 is a Mg(2+) binding site. Asparagine 124 contributes to the anthranilate binding site. Residue arginine 179 coordinates anthranilate. Mg(2+)-binding residues include aspartate 238 and glutamate 239.

It belongs to the anthranilate phosphoribosyltransferase family. Homodimer. The cofactor is Mg(2+).

It carries out the reaction N-(5-phospho-beta-D-ribosyl)anthranilate + diphosphate = 5-phospho-alpha-D-ribose 1-diphosphate + anthranilate. It functions in the pathway amino-acid biosynthesis; L-tryptophan biosynthesis; L-tryptophan from chorismate: step 2/5. In terms of biological role, catalyzes the transfer of the phosphoribosyl group of 5-phosphorylribose-1-pyrophosphate (PRPP) to anthranilate to yield N-(5'-phosphoribosyl)-anthranilate (PRA). The chain is Anthranilate phosphoribosyltransferase from Parasynechococcus marenigrum (strain WH8102).